The primary structure comprises 113 residues: Iron-sulfur cluster insertion protein ErpA (113 aa).

Positions 41, 105, and 107 each coordinate iron-sulfur cluster.

The protein belongs to the HesB/IscA family. As to quaternary structure, homodimer. The cofactor is iron-sulfur cluster.

In terms of biological role, required for insertion of 4Fe-4S clusters for at least IspG. This Colwellia psychrerythraea (strain 34H / ATCC BAA-681) (Vibrio psychroerythus) protein is Iron-sulfur cluster insertion protein ErpA.